Consider the following 498-residue polypeptide: GTPase Der (498 aa).

EngA-type G domains follow at residues 3–166 and 212–385; these read PVVA…FEEL and IKFA…RSAT. Residues 9-16, 56-60, 118-121, 218-225, 265-269, and 330-333 contribute to the GTP site; these read GRPNVGKS, DTGGI, NKTD, DTAGV, and NKWD. Positions 386–470 constitute a KH-like domain; that stretch reads KRISTSMLTR…PIHIEFQEGD (85 aa).

The protein belongs to the TRAFAC class TrmE-Era-EngA-EngB-Septin-like GTPase superfamily. EngA (Der) GTPase family. Associates with the 50S ribosomal subunit.

Functionally, GTPase that plays an essential role in the late steps of ribosome biogenesis. This Tolumonas auensis (strain DSM 9187 / NBRC 110442 / TA 4) protein is GTPase Der.